We begin with the raw amino-acid sequence, 270 residues long: 4-hydroxy-tetrahydrodipicolinate reductase (270 aa).

NAD(+) is bound by residues 8-13 (GALGRM), Asp34, 102-104 (GTT), and 128-131 (SQNY). Catalysis depends on His160, which acts as the Proton donor/acceptor. Residue His161 coordinates (S)-2,3,4,5-tetrahydrodipicolinate. Lys164 (proton donor) is an active-site residue. 170 to 171 (GT) contacts (S)-2,3,4,5-tetrahydrodipicolinate.

This sequence belongs to the DapB family.

Its subcellular location is the cytoplasm. The catalysed reaction is (S)-2,3,4,5-tetrahydrodipicolinate + NAD(+) + H2O = (2S,4S)-4-hydroxy-2,3,4,5-tetrahydrodipicolinate + NADH + H(+). It carries out the reaction (S)-2,3,4,5-tetrahydrodipicolinate + NADP(+) + H2O = (2S,4S)-4-hydroxy-2,3,4,5-tetrahydrodipicolinate + NADPH + H(+). Its pathway is amino-acid biosynthesis; L-lysine biosynthesis via DAP pathway; (S)-tetrahydrodipicolinate from L-aspartate: step 4/4. In terms of biological role, catalyzes the conversion of 4-hydroxy-tetrahydrodipicolinate (HTPA) to tetrahydrodipicolinate. The polypeptide is 4-hydroxy-tetrahydrodipicolinate reductase (Methanococcus maripaludis (strain C7 / ATCC BAA-1331)).